Reading from the N-terminus, the 577-residue chain is Aspartate--tRNA(Asp) ligase (577 aa).

Glutamate 172 contributes to the L-aspartate binding site. The segment at 196 to 199 (QLFK) is aspartate. Arginine 218 contributes to the L-aspartate binding site. ATP contacts are provided by residues 218–220 (RDE) and glutamine 227. Residue histidine 438 coordinates L-aspartate. Glutamate 473 contacts ATP. Arginine 480 contributes to the L-aspartate binding site. 525-528 (GFDR) contacts ATP.

The protein belongs to the class-II aminoacyl-tRNA synthetase family. Type 1 subfamily. In terms of assembly, homodimer.

The protein localises to the cytoplasm. It carries out the reaction tRNA(Asp) + L-aspartate + ATP = L-aspartyl-tRNA(Asp) + AMP + diphosphate. Its function is as follows. Catalyzes the attachment of L-aspartate to tRNA(Asp) in a two-step reaction: L-aspartate is first activated by ATP to form Asp-AMP and then transferred to the acceptor end of tRNA(Asp). Is specific for tRNA(Asp) since it cannot aspartylate tRNA(Asn). This chain is Aspartate--tRNA(Asp) ligase (aspS1), found in Deinococcus radiodurans (strain ATCC 13939 / DSM 20539 / JCM 16871 / CCUG 27074 / LMG 4051 / NBRC 15346 / NCIMB 9279 / VKM B-1422 / R1).